Reading from the N-terminus, the 467-residue chain is ESX-4 secretion system protein eccD4 (467 aa).

A run of 11 helical transmembrane segments spans residues 122–142, 152–172, 186–206, 209–229, 241–261, 264–284, 319–339, 344–364, 374–394, 401–421, and 439–459; these read GALA…RNAL, ATAG…VIAC, VIAT…VPGV, VLVA…ITGC, AVVV…VPAI, LATL…VLLA, LTSL…GTAV, IHRS…LLLL, SLVF…VAAD, PWIA…GFVA, and CLAL…YSAV.

The protein belongs to the EccD/Snm4 family. Part of the ESX-4 / type VII secretion system (T7SS), which is composed of cytosolic and membrane components.

It is found in the cell membrane. In Mycobacterium tuberculosis (strain CDC 1551 / Oshkosh), this protein is ESX-4 secretion system protein eccD4 (eccD4).